The chain runs to 331 residues: 6-phosphogluconolactonase (331 aa).

This sequence belongs to the cycloisomerase 2 family.

It catalyses the reaction 6-phospho-D-glucono-1,5-lactone + H2O = 6-phospho-D-gluconate + H(+). The protein operates within carbohydrate degradation; pentose phosphate pathway; D-ribulose 5-phosphate from D-glucose 6-phosphate (oxidative stage): step 2/3. In terms of biological role, catalyzes the hydrolysis of 6-phosphogluconolactone to 6-phosphogluconate. The protein is 6-phosphogluconolactonase of Salmonella paratyphi A (strain ATCC 9150 / SARB42).